We begin with the raw amino-acid sequence, 234 residues long: Phosphoribosylformylglycinamidine synthase subunit PurQ (234 aa).

Residues 3–231 (AAVVVFPGSN…ALYLERRKDH (229 aa)) enclose the Glutamine amidotransferase type-1 domain. C87 (nucleophile) is an active-site residue. Residues H200 and E202 contribute to the active site.

As to quaternary structure, part of the FGAM synthase complex composed of 1 PurL, 1 PurQ and 2 PurS subunits.

It localises to the cytoplasm. The catalysed reaction is N(2)-formyl-N(1)-(5-phospho-beta-D-ribosyl)glycinamide + L-glutamine + ATP + H2O = 2-formamido-N(1)-(5-O-phospho-beta-D-ribosyl)acetamidine + L-glutamate + ADP + phosphate + H(+). The enzyme catalyses L-glutamine + H2O = L-glutamate + NH4(+). It participates in purine metabolism; IMP biosynthesis via de novo pathway; 5-amino-1-(5-phospho-D-ribosyl)imidazole from N(2)-formyl-N(1)-(5-phospho-D-ribosyl)glycinamide: step 1/2. Functionally, part of the phosphoribosylformylglycinamidine synthase complex involved in the purines biosynthetic pathway. Catalyzes the ATP-dependent conversion of formylglycinamide ribonucleotide (FGAR) and glutamine to yield formylglycinamidine ribonucleotide (FGAM) and glutamate. The FGAM synthase complex is composed of three subunits. PurQ produces an ammonia molecule by converting glutamine to glutamate. PurL transfers the ammonia molecule to FGAR to form FGAM in an ATP-dependent manner. PurS interacts with PurQ and PurL and is thought to assist in the transfer of the ammonia molecule from PurQ to PurL. The polypeptide is Phosphoribosylformylglycinamidine synthase subunit PurQ (Pseudothermotoga lettingae (strain ATCC BAA-301 / DSM 14385 / NBRC 107922 / TMO) (Thermotoga lettingae)).